A 414-amino-acid chain; its full sequence is UDP-N-acetylglucosamine 1-carboxyvinyltransferase (414 aa).

19–20 (KN) is a phosphoenolpyruvate binding site. Arg-89 contributes to the UDP-N-acetyl-alpha-D-glucosamine binding site. Cys-113 functions as the Proton donor in the catalytic mechanism. At Cys-113 the chain carries 2-(S-cysteinyl)pyruvic acid O-phosphothioketal. Residues 118–122 (RPIDL), Asp-301, and Val-323 each bind UDP-N-acetyl-alpha-D-glucosamine.

This sequence belongs to the EPSP synthase family. MurA subfamily.

Its subcellular location is the cytoplasm. It carries out the reaction phosphoenolpyruvate + UDP-N-acetyl-alpha-D-glucosamine = UDP-N-acetyl-3-O-(1-carboxyvinyl)-alpha-D-glucosamine + phosphate. The protein operates within cell wall biogenesis; peptidoglycan biosynthesis. Its function is as follows. Cell wall formation. Adds enolpyruvyl to UDP-N-acetylglucosamine. The sequence is that of UDP-N-acetylglucosamine 1-carboxyvinyltransferase from Bdellovibrio bacteriovorus (strain ATCC 15356 / DSM 50701 / NCIMB 9529 / HD100).